We begin with the raw amino-acid sequence, 348 residues long: tRNA pseudouridine synthase D (348 aa).

The active-site Nucleophile is Asp-84. The TRUD domain maps to 162-308 (GVPNYFGPQR…ARMDRRPLCL (147 aa)).

The protein belongs to the pseudouridine synthase TruD family.

The catalysed reaction is uridine(13) in tRNA = pseudouridine(13) in tRNA. In terms of biological role, responsible for synthesis of pseudouridine from uracil-13 in transfer RNAs. This Chromohalobacter salexigens (strain ATCC BAA-138 / DSM 3043 / CIP 106854 / NCIMB 13768 / 1H11) protein is tRNA pseudouridine synthase D.